The chain runs to 585 residues: Protein DENND6B (585 aa).

One can recognise a uDENN domain in the interval Glu-43–Val-214. One can recognise a cDENN domain in the interval Val-246 to Lys-373. One can recognise a dDENN domain in the interval Leu-375–Arg-499.

The protein belongs to the DENND6 family.

Its subcellular location is the recycling endosome. The protein localises to the cytoplasm. Functionally, guanine nucleotide exchange factor (GEF) for RAB14. Also has some, lesser GEF activity towards RAB35. In Homo sapiens (Human), this protein is Protein DENND6B (DENND6B).